The primary structure comprises 555 residues: 3-oxocholest-4-en-26-oate--CoA ligase (555 aa).

ATP is bound by residues 172 to 180 (TGGTTGHPK), Asp418, Arg433, and Lys524. Residues 525–555 (PDYRWAKDQTGLRPADEVYNNGDGNGAAATG) form a disordered region. Positions 544-555 (NNGDGNGAAATG) are enriched in low complexity.

It belongs to the ATP-dependent AMP-binding enzyme family.

The enzyme catalyses (25S)-3-oxocholest-4-en-26-oate + ATP + CoA = (25S)-3-oxocholest-4-en-26-oyl-CoA + AMP + diphosphate. It functions in the pathway steroid metabolism; cholesterol metabolism. In terms of biological role, involved in the degradation of the side chains of C-24 branched-chain sterols. Catalyzes the ATP-dependent CoA thioesterification of the sterol 3-oxocholest-4-en-26-oate to yield 3-oxocholest-4-en-26-oyl-CoA. It can also use beta-sitosterol, campesterol and 3beta-hydroxy-5-cholesten-26-oate. The chain is 3-oxocholest-4-en-26-oate--CoA ligase from Rhodococcus rhodochrous.